The primary structure comprises 58 residues: Small ribosomal subunit protein bS21 (58 aa).

A compositionally biased stretch (basic and acidic residues) spans 32-42; the sequence is IRKREHYEKPS. The interval 32–58 is disordered; it reads IRKREHYEKPSVKRKKKSEAARKRKFK. Residues 43–58 are compositionally biased toward basic residues; the sequence is VKRKKKSEAARKRKFK.

The protein belongs to the bacterial ribosomal protein bS21 family.

This chain is Small ribosomal subunit protein bS21, found in Lachnoclostridium phytofermentans (strain ATCC 700394 / DSM 18823 / ISDg) (Clostridium phytofermentans).